The sequence spans 466 residues: Coagulation factor VII (466 aa).

Positions 1–20 (MVSQALRLLCLLLGLQGCLA) are cleaved as a signal peptide. The propeptide occupies 21 to 60 (AGGVAKASGGETRDMPWKPGPHRVFVTQEEAHGVLHRRRR). The Gla domain maps to 61–105 (ANAFLEELRPGSLERECKEEQCSFEEAREIFKDAERTKLFWISYS). Glutamate 66, glutamate 67, glutamate 74, glutamate 76, glutamate 79, glutamate 80, glutamate 85, glutamate 86, glutamate 89, and glutamate 95 each carry 4-carboxyglutamate. Cysteine 77 and cysteine 82 are joined by a disulfide. The EGF-like 1; calcium-binding domain occupies 106–142 (DGDQCASSPCQNGGSCKDQLQSYICFCLPAFEGRNCE). 10 disulfide bridges follow: cysteine 110–cysteine 121, cysteine 115–cysteine 130, cysteine 132–cysteine 141, cysteine 151–cysteine 162, cysteine 158–cysteine 172, cysteine 174–cysteine 187, cysteine 195–cysteine 322, cysteine 219–cysteine 224, cysteine 238–cysteine 254, and cysteine 370–cysteine 389. O-linked (Glc...) serine; alternate glycosylation is present at serine 112. Residue serine 112 is glycosylated (O-linked (Xyl...) serine; alternate). Residue serine 120 is glycosylated (O-linked (Fuc) serine). Aspartate 123 is subject to (3R)-3-hydroxyaspartate. The 42-residue stretch at 147 to 188 (DQLICVNENGGCEQYCSDHTGTKRSCRCHEGYSLLADGVSCT) folds into the EGF-like 2 domain. N-linked (GlcNAc...) asparagine glycosylation is present at asparagine 205. The region spanning 213–452 (IVGGKVCPKG…YIEWLQKLMR (240 aa)) is the Peptidase S1 domain. Active-site charge relay system residues include histidine 253 and aspartate 302. Asparagine 382 carries an N-linked (GlcNAc...) asparagine glycan. Substrate is bound at residue aspartate 398. A disulfide bond links cysteine 400 and cysteine 428. Serine 404 (charge relay system) is an active-site residue.

The protein belongs to the peptidase S1 family. As to quaternary structure, heterodimer of a light chain and a heavy chain linked by a disulfide bond. Interacts (activated) with iripin-8, a serine protease inhibitor from Ixodes ricinus saliva. The vitamin K-dependent, enzymatic carboxylation of some glutamate residues allows the modified protein to bind calcium. In terms of processing, the iron and 2-oxoglutarate dependent 3-hydroxylation of aspartate and asparagine is (R) stereospecific within EGF domains. Post-translationally, O- and N-glycosylated. N-glycosylation at Asn-205 occurs cotranslationally and is mediated by STT3A-containing complexes, while glycosylation at Asn-382 is post-translational and is mediated STT3B-containing complexes before folding. O-fucosylated by POFUT1 on a conserved serine or threonine residue found in the consensus sequence C2-X(4,5)-[S/T]-C3 of EGF domains, where C2 and C3 are the second and third conserved cysteines. Can be either O-glucosylated or O-xylosylated at Ser-112 by POGLUT1 in vitro. In terms of tissue distribution, plasma.

It is found in the secreted. The enzyme catalyses Selective cleavage of Arg-|-Ile bond in factor X to form factor Xa.. In terms of biological role, initiates the extrinsic pathway of blood coagulation. Serine protease that circulates in the blood in a zymogen form. Factor VII is converted to factor VIIa by factor Xa, factor XIIa, factor IXa, or thrombin by minor proteolysis. In the presence of tissue factor and calcium ions, factor VIIa then converts factor X to factor Xa by limited proteolysis. Factor VIIa also converts factor IX to factor IXa in the presence of tissue factor and calcium. In Homo sapiens (Human), this protein is Coagulation factor VII (F7).